A 364-amino-acid polypeptide reads, in one-letter code: Chorismate synthase (364 aa).

NADP(+) is bound at residue R47. FMN-binding positions include 124–126 (RGS), 240–241 (NA), G284, 299–303 (KPTPS), and R326.

Belongs to the chorismate synthase family. FMNH2 is required as a cofactor.

The enzyme catalyses 5-O-(1-carboxyvinyl)-3-phosphoshikimate = chorismate + phosphate. It functions in the pathway metabolic intermediate biosynthesis; chorismate biosynthesis; chorismate from D-erythrose 4-phosphate and phosphoenolpyruvate: step 7/7. Functionally, catalyzes the anti-1,4-elimination of the C-3 phosphate and the C-6 proR hydrogen from 5-enolpyruvylshikimate-3-phosphate (EPSP) to yield chorismate, which is the branch point compound that serves as the starting substrate for the three terminal pathways of aromatic amino acid biosynthesis. This reaction introduces a second double bond into the aromatic ring system. The sequence is that of Chorismate synthase from Methanobrevibacter smithii (strain ATCC 35061 / DSM 861 / OCM 144 / PS).